We begin with the raw amino-acid sequence, 131 residues long: Histone H2B.1 (131 aa).

Basic and acidic residues predominate over residues 1-20 (MAPPKAEKKPASKAPAEKKP). The disordered stretch occupies residues 1–39 (MAPPKAEKKPASKAPAEKKPAAKKTASATDSKKRTKTRK). 2 positions are modified to N6-acetyllysine; alternate: Lys8 and Lys9. Residues Lys8 and Lys9 each participate in a glycyl lysine isopeptide (Lys-Gly) (interchain with G-Cter in SUMO); alternate cross-link. Phosphoserine is present on Ser12. N6-acetyllysine is present on Lys13. Residue Lys18 is modified to N6-acetyllysine; alternate. Residue Lys18 forms a Glycyl lysine isopeptide (Lys-Gly) (interchain with G-Cter in SUMO); alternate linkage. Residue Lys19 forms a Glycyl lysine isopeptide (Lys-Gly) (interchain with G-Cter in SUMO) linkage. Lys125 participates in a covalent cross-link: Glycyl lysine isopeptide (Lys-Gly) (interchain with G-Cter in ubiquitin).

This sequence belongs to the histone H2B family. As to quaternary structure, the nucleosome is a histone octamer containing two molecules each of H2A, H2B, H3 and H4 assembled in one H3-H4 heterotetramer and two H2A-H2B heterodimers. The octamer wraps approximately 147 bp of DNA. Post-translationally, monoubiquitinated to form H2BK123ub1. H2BK123ub1 gives a specific tag for epigenetic transcriptional activation and is also prerequisite for H3K4me and H3K79me formation. H2BK123ub1 also modulates the formation of double-strand breaks during meiosis and is a prerequisite for DNA-damage checkpoint activation. Phosphorylated by STE20 to form H2BS10ph during progression through meiotic prophase. May be correlated with chromosome condensation. In terms of processing, acetylated by GCN5 to form H2BK11ac and H2BK16ac. H2BK16ac can also be formed by ESA1. Acetylation of N-terminal lysines and particularly formation of H2BK11acK16ac has a positive effect on transcription. Post-translationally, sumoylation to form H2BK6su or H2BK7su, and probably also H2BK16su or H2BK17su, occurs preferentially near the telomeres and represses gene transcription.

The protein resides in the nucleus. The protein localises to the chromosome. Core component of nucleosome. Nucleosomes wrap and compact DNA into chromatin, limiting DNA accessibility to the cellular machineries which require DNA as a template. Histones thereby play a central role in transcription regulation, DNA repair, DNA replication and chromosomal stability. DNA accessibility is regulated via a complex set of post-translational modifications of histones, also called histone code, and nucleosome remodeling. The protein is Histone H2B.1 (HTB1) of Scheffersomyces stipitis (strain ATCC 58785 / CBS 6054 / NBRC 10063 / NRRL Y-11545) (Yeast).